The sequence spans 841 residues: Probable outer membrane usher protein EcpC (841 aa).

The signal sequence occupies residues 1-29; it reads MPLRRFSPGLKAQFAFGMVFLFVQPDASA.

The protein belongs to the EcpC/MatD family.

Its function is as follows. Part of the ecpRABCDE operon, which encodes the E.coli common pilus (ECP). ECP is found in both commensal and pathogenic strains and plays a dual role in early-stage biofilm development and host cell recognition. The chain is Probable outer membrane usher protein EcpC (ecpC) from Escherichia coli O157:H7.